We begin with the raw amino-acid sequence, 194 residues long: uncharacterized protein (194 aa).

The protein belongs to the mimivirus L114/R131 family.

This is an uncharacterized protein from Acanthamoeba polyphaga mimivirus (APMV).